A 195-amino-acid chain; its full sequence is Cysteine/O-acetylserine efflux protein (195 aa).

Over 1 to 9 the chain is Periplasmic; the sequence is MTPILLSAF. Residues 10–32 form a helical membrane-spanning segment; the sequence is WTYTLITAMTPGPNNILALSSAT. The Cytoplasmic portion of the chain corresponds to 33-46; sequence SHGFRQSTRVLAGM. The chain crosses the membrane as a helical span at residues 47 to 67; it reads SLGFLIVMLLCAGISFSLAVI. Topologically, residues 68-69 are periplasmic; it reads DP. The helical transmembrane segment at 70 to 90 threads the bilayer; it reads AAVHLLSWAGAAYIVWLAWKI. The Cytoplasmic portion of the chain corresponds to 91-104; it reads ATSPTKEDGLQAKP. Residues 105-125 traverse the membrane as a helical segment; the sequence is ISFWASFALQFVNVKIILYGV. The Periplasmic portion of the chain corresponds to 126–141; it reads TALSTFVLPQTQALSW. Residues 142-162 form a helical membrane-spanning segment; that stretch reads VVGVSVLLAMIGTFGNVCWAL. Residues 163-176 are Cytoplasmic-facing; it reads AGHLFQRLFRQYGR. A helical transmembrane segment spans residues 177–194; it reads QLNIVLALLLVYCAVRIF. Position 195 (Y195) is a topological domain, periplasmic.

It belongs to the Rht family.

It is found in the cell inner membrane. The catalysed reaction is O-acetyl-L-serine(in) = O-acetyl-L-serine(out). It catalyses the reaction L-cysteine(in) = L-cysteine(out). Exporter of O-acetylserine (OAS) and cysteine. The protein is Cysteine/O-acetylserine efflux protein (eamB) of Shigella flexneri serotype 5b (strain 8401).